A 560-amino-acid chain; its full sequence is Chaperonin GroEL 2 (560 aa).

Residues 29–32 (TLGP), K50, 86–90 (DGTTT), G414, and D494 each bind ATP. The tract at residues 524–546 (EDEDDDDGGGGGGGGMPAGGAGG) is disordered. Gly residues predominate over residues 532–546 (GGGGGGGMPAGGAGG).

It belongs to the chaperonin (HSP60) family. As to quaternary structure, forms a cylinder of 14 subunits composed of two heptameric rings stacked back-to-back. Interacts with the co-chaperonin GroES.

The protein resides in the cytoplasm. It catalyses the reaction ATP + H2O + a folded polypeptide = ADP + phosphate + an unfolded polypeptide.. Its function is as follows. Together with its co-chaperonin GroES, plays an essential role in assisting protein folding. The GroEL-GroES system forms a nano-cage that allows encapsulation of the non-native substrate proteins and provides a physical environment optimized to promote and accelerate protein folding. This is Chaperonin GroEL 2 from Salinibacter ruber (strain DSM 13855 / M31).